A 1845-amino-acid polypeptide reads, in one-letter code: Histone-lysine N-methyltransferase, H3 lysine-79 specific (1845 aa).

Residues 1-44 (MSTNSTPRKQKLSNSKSLQNSPISPTVKKTNSFPLGNNIPTNIN) are compositionally biased toward polar residues. Disordered stretches follow at residues 1–67 (MSTN…NGIG), 83–306 (PPLP…NKWT), 450–470 (SHDI…NKNK), 486–571 (QKLK…TERK), 585–681 (RKER…NDSY), 741–767 (GETF…KKIE), 862–881 (QTTK…AETE), and 963–1102 (KDNP…SNSL). Low complexity-rich tracts occupy residues 52-67 (NNSN…NGIG), 90-162 (SSSS…QQEP), 191-226 (PSTP…SNNS), and 239-263 (NNNN…NNNN). Residues 268 to 280 (VIDDDDDDDDDEG) show a composition bias toward acidic residues. The span at 282–294 (SIKSTHTSTQSTP) shows a compositional bias: polar residues. Positions 295–304 (IRDRRQRDNK) are enriched in basic and acidic residues. Over residues 453 to 464 (INNNNNNNNNNK) the composition is skewed to low complexity. Positions 585 to 679 (RKERERKERK…IEKERREKND (95 aa)) are enriched in basic and acidic residues. The interval 625–639 (KKKEKEKEKEKEKEK) is required for interaction with nucleosomes and DNA. 4 stretches are compositionally biased toward low complexity: residues 750 to 763 (NNNN…NNNN), 862 to 877 (QTTK…TTTT), 972 to 1011 (NNNR…RNNN), and 1020 to 1067 (NNNN…NNTI). Basic and acidic residues predominate over residues 1069 to 1080 (KKIETIKKDINK). Positions 1084 to 1102 (KTTTTTSSSSSSTSSSNSL) are enriched in low complexity. Residues 1125-1446 (FDVGIGVPVT…KDSDIVTDQT (322 aa)) enclose the DOT1 domain. Residues 1251–1254 (YGEA), 1274–1283 (FCDIGCGIGN), and glutamate 1300 each bind S-adenosyl-L-methionine. Disordered regions lie at residues 1463-1559 (LQLF…NKPI), 1610-1661 (RISP…SSND), 1735-1762 (HQKS…KKEQ), 1772-1791 (NYNN…NHNN), and 1799-1845 (TDLI…DNNK). Composition is skewed to low complexity over residues 1467–1522 (SSSS…TPNS), 1541–1556 (NNNN…NSNN), and 1610–1642 (RISP…SSSD). Over residues 1643-1656 (NENDDDNGDDEDDS) the composition is skewed to acidic residues. Over residues 1745 to 1759 (RLSRKQKKLAKKNKK) the composition is skewed to basic residues. 2 stretches are compositionally biased toward low complexity: residues 1799–1817 (TDLI…INND) and 1835–1845 (KDYNNINDNNK).

The protein belongs to the class I-like SAM-binding methyltransferase superfamily. DOT1 family.

It localises to the nucleus. It catalyses the reaction L-lysyl(79)-[histone H3] + 3 S-adenosyl-L-methionine = N(6),N(6),N(6)-trimethyl-L-lysyl(79)-[histone H3] + 3 S-adenosyl-L-homocysteine + 3 H(+). Its function is as follows. Histone methyltransferase that specifically methylates histone H3 to form H3K79me. This methylation is required for telomere silencing, correct growth and development, and for resistance to DNA damage induced by UV LIGHT. This is Histone-lysine N-methyltransferase, H3 lysine-79 specific from Dictyostelium discoideum (Social amoeba).